Here is a 312-residue protein sequence, read N- to C-terminus: MNIGILGTGHYLPTNVVTNNDLEKIVDTNDEWIRTRTGIRERRLATEEVDTSDMAFHAALGALEEANLAAEDIDLILVATVTPNTSFPSVACIIQDQLGAKNAAAMDVSAACAGFMYGLITAKQFIDTGAYKHVLVVGAEKLSKITDWSDRTTCVLFGDGAGAAVVGEVGEGKGILSFELGANGAGAKELYLNHDDHIIMNGREVYKFAVRQMPDSTVNVIEQLGLSRDDVDYLVPHQANIRIMEAARERLGISEDKMAKSIEKFGNNSSASIPMALSEAVKEGKIKDNDLIVLVGFGGGLTWGAVALRWGK.

Active-site residues include Cys-112 and His-237. Residues 238–242 (QANIR) form an ACP-binding region. Asn-267 is a catalytic residue.

The protein belongs to the thiolase-like superfamily. FabH family. As to quaternary structure, homodimer.

It localises to the cytoplasm. It carries out the reaction malonyl-[ACP] + acetyl-CoA + H(+) = 3-oxobutanoyl-[ACP] + CO2 + CoA. The protein operates within lipid metabolism; fatty acid biosynthesis. In terms of biological role, catalyzes the condensation reaction of fatty acid synthesis by the addition to an acyl acceptor of two carbons from malonyl-ACP. Catalyzes the first condensation reaction which initiates fatty acid synthesis and may therefore play a role in governing the total rate of fatty acid production. Possesses both acetoacetyl-ACP synthase and acetyl transacylase activities. Its substrate specificity determines the biosynthesis of branched-chain and/or straight-chain of fatty acids. The polypeptide is Beta-ketoacyl-[acyl-carrier-protein] synthase III (Oceanobacillus iheyensis (strain DSM 14371 / CIP 107618 / JCM 11309 / KCTC 3954 / HTE831)).